The following is a 153-amino-acid chain: Glucose-6-phosphate 1-dehydrogenase (153 aa).

Residues arginine 21 and lysine 120 each coordinate NADP(+). Position 120 (lysine 120) interacts with D-glucose 6-phosphate.

Belongs to the glucose-6-phosphate dehydrogenase family.

The protein localises to the cytoplasm. Its subcellular location is the cytosol. The catalysed reaction is D-glucose 6-phosphate + NADP(+) = 6-phospho-D-glucono-1,5-lactone + NADPH + H(+). The protein operates within carbohydrate degradation; pentose phosphate pathway; D-ribulose 5-phosphate from D-glucose 6-phosphate (oxidative stage): step 1/3. In terms of biological role, cytosolic glucose-6-phosphate dehydrogenase that catalyzes the first and rate-limiting step of the oxidative branch within the pentose phosphate pathway/shunt, an alternative route to glycolysis for the dissimilation of carbohydrates and a major source of reducing power and metabolic intermediates for fatty acid and nucleic acid biosynthetic processes. The polypeptide is Glucose-6-phosphate 1-dehydrogenase (ZW) (Hyalophora cecropia (Cecropia moth)).